Reading from the N-terminus, the 442-residue chain is Tubulin beta chain (442 aa).

GTP contacts are provided by Gln-11, Glu-69, Ser-138, Gly-142, Thr-143, Gly-144, Asn-204, and Asn-226. Residue Glu-69 participates in Mg(2+) binding.

This sequence belongs to the tubulin family. Dimer of alpha and beta chains. A typical microtubule is a hollow water-filled tube with an outer diameter of 25 nm and an inner diameter of 15 nM. Alpha-beta heterodimers associate head-to-tail to form protofilaments running lengthwise along the microtubule wall with the beta-tubulin subunit facing the microtubule plus end conferring a structural polarity. Microtubules usually have 13 protofilaments but different protofilament numbers can be found in some organisms and specialized cells. Requires Mg(2+) as cofactor.

It is found in the cytoplasm. Its subcellular location is the cytoskeleton. In terms of biological role, tubulin is the major constituent of microtubules, a cylinder consisting of laterally associated linear protofilaments composed of alpha- and beta-tubulin heterodimers. Microtubules grow by the addition of GTP-tubulin dimers to the microtubule end, where a stabilizing cap forms. Below the cap, tubulin dimers are in GDP-bound state, owing to GTPase activity of alpha-tubulin. The polypeptide is Tubulin beta chain (bPT2) (Paramecium tetraurelia).